The chain runs to 99 residues: MAPGLVVGLNKGKVLTKRQLPERPSRRKGQLSKRTSFVRSIVREVAGFAPYERRVMELIRNSQDKRARKLAKKRLGTLKRAKGKIEELTSVIQSSRLAH.

This sequence belongs to the eukaryotic ribosomal protein eL36 family. In terms of assembly, component of the large ribosomal subunit (LSU). Mature yeast ribosomes consist of a small (40S) and a large (60S) subunit. The 40S small subunit contains 1 molecule of ribosomal RNA (18S rRNA) and at least 33 different proteins. The large 60S subunit contains 3 rRNA molecules (25S, 5.8S and 5S rRNA) and at least 46 different proteins.

It localises to the cytoplasm. Component of the ribosome, a large ribonucleoprotein complex responsible for the synthesis of proteins in the cell. The small ribosomal subunit (SSU) binds messenger RNAs (mRNAs) and translates the encoded message by selecting cognate aminoacyl-transfer RNA (tRNA) molecules. The large subunit (LSU) contains the ribosomal catalytic site termed the peptidyl transferase center (PTC), which catalyzes the formation of peptide bonds, thereby polymerizing the amino acids delivered by tRNAs into a polypeptide chain. The nascent polypeptides leave the ribosome through a tunnel in the LSU and interact with protein factors that function in enzymatic processing, targeting, and the membrane insertion of nascent chains at the exit of the ribosomal tunnel. The sequence is that of Large ribosomal subunit protein eL36A (rpl3601) from Schizosaccharomyces pombe (strain 972 / ATCC 24843) (Fission yeast).